Consider the following 365-residue polypeptide: Endophilin-B1 (365 aa).

N-acetylmethionine is present on Met1. The membrane-binding amphipathic helix stretch occupies residues Met1–Leu30. The required for membrane binding stretch occupies residues Met1–Glu37. The BAR domain maps to Glu27–Ser261. A Phosphothreonine; by CDK5 modification is found at Thr145. Residues Tyr155–Glu186 are a coiled coil. Residues Ser305–Asn365 form the SH3 domain.

Belongs to the endophilin family. As to quaternary structure, homodimer, and heterodimer with SH3GLB2. Binds BAX; induction of apoptosis augments BAX binding. Binds DNM1, HTT, AMPH, BIN1 and ARFGAP1. Interacts with UVRAG; UVRAG bridges the interaction to BECN1 indicative for an association with the PI3K complex II (PI3KC3-C2). Isoform 3 interacts with PPP1CC; this interaction leads to the inhibition of phosphatase activity. In terms of processing, phosphorylated at Thr-145 by CDK5; this phosphorylation is required for autophagy induction in starved neurons and facilitates homodimerization. In terms of tissue distribution, isoform 1 is widely expressed. Isoform 2 is brain-specific. Isoform 3 is predominantly expressed in testis, but it is also detected in liver and, at much lower levels, in skin, stomach and ovary.

The protein localises to the cytoplasm. Its subcellular location is the golgi apparatus membrane. It localises to the mitochondrion outer membrane. The protein resides in the cytoplasmic vesicle. It is found in the autophagosome membrane. The protein localises to the midbody. Its function is as follows. May be required for normal outer mitochondrial membrane dynamics. Required for coatomer-mediated retrograde transport in certain cells. May recruit other proteins to membranes with high curvature. May promote membrane fusion. Involved in activation of caspase-dependent apoptosis by promoting BAX/BAK1 activation. Isoform 1 acts proapoptotic in fibroblasts. Involved in caspase-independent apoptosis during nutrition starvation and involved in the regulation of autophagy. Activates lipid kinase activity of PIK3C3 during autophagy probably by associating with the PI3K complex II (PI3KC3-C2). Associated with PI3KC3-C2 during autophagy may regulate the trafficking of ATG9A from the Golgi complex to the peripheral cytoplasm for the formation of autophagosomes by inducing Golgi membrane tubulation and fragmentation. Involved in regulation of degradative endocytic trafficking and cytokinesis, probably in the context of PI3KC3-C2. Isoform 2 acts antiapoptotic in neuronal cells; involved in maintenance of mitochondrial morphology and promotes neuronal viability. This Mus musculus (Mouse) protein is Endophilin-B1 (Sh3glb1).